The following is a 286-amino-acid chain: 33 kDa chaperonin (286 aa).

Cystine bridges form between C225–C227 and C258–C261.

Belongs to the HSP33 family. In terms of processing, under oxidizing conditions two disulfide bonds are formed involving the reactive cysteines. Under reducing conditions zinc is bound to the reactive cysteines and the protein is inactive.

Its subcellular location is the cytoplasm. Redox regulated molecular chaperone. Protects both thermally unfolding and oxidatively damaged proteins from irreversible aggregation. Plays an important role in the bacterial defense system toward oxidative stress. The sequence is that of 33 kDa chaperonin from Shewanella oneidensis (strain ATCC 700550 / JCM 31522 / CIP 106686 / LMG 19005 / NCIMB 14063 / MR-1).